The chain runs to 425 residues: MLDLKRIRTDFDTVAAKLKKRGVSEDTLTHLKELDEKRRALLVQSEELKAERNIASAAIAQAKRQKEDATQQIADMQKVSADIKTIDNQLVAIDQQVTDIITVLPNTPHDSVPVGADEEDNVEIRRWGTPRDFDFEVKAHWDLGEDLDILDWERGAKVTGARFLFYKNLGARLERALYNFMLDEHIKEGYQEIITPYMVNHDSMFGTGQYPKFKEDTFELADTNFVLIPTAEVPLTNYYRGEILDGKELPIYFTAMSPSFRSEAGSAGRDTRGLIRLHQFHKVEMVKFAKPEESYQELEKMTANAENILQKLGLPYRVISLCTGDMGFSAAKTYDVEVWIPAQNTYREISSCSNTEDFQARRAQIRYRDEADGKVKLLHTLNGSGLAVGRTVAAILENYQNEDGSVTIPEVLRPYMGGETVISPK.

T230–E232 contacts L-serine. R261–E263 contacts ATP. E284 is an L-serine binding site. E348 to S351 lines the ATP pocket. Residue S384 coordinates L-serine.

The protein belongs to the class-II aminoacyl-tRNA synthetase family. Type-1 seryl-tRNA synthetase subfamily. Homodimer. The tRNA molecule binds across the dimer.

It is found in the cytoplasm. The enzyme catalyses tRNA(Ser) + L-serine + ATP = L-seryl-tRNA(Ser) + AMP + diphosphate + H(+). It carries out the reaction tRNA(Sec) + L-serine + ATP = L-seryl-tRNA(Sec) + AMP + diphosphate + H(+). It participates in aminoacyl-tRNA biosynthesis; selenocysteinyl-tRNA(Sec) biosynthesis; L-seryl-tRNA(Sec) from L-serine and tRNA(Sec): step 1/1. Functionally, catalyzes the attachment of serine to tRNA(Ser). Is also able to aminoacylate tRNA(Sec) with serine, to form the misacylated tRNA L-seryl-tRNA(Sec), which will be further converted into selenocysteinyl-tRNA(Sec). This Streptococcus pyogenes serotype M49 (strain NZ131) protein is Serine--tRNA ligase.